An 85-amino-acid chain; its full sequence is Large ribosomal subunit protein bL27 (85 aa).

It belongs to the bacterial ribosomal protein bL27 family.

The chain is Large ribosomal subunit protein bL27 from Leptospira biflexa serovar Patoc (strain Patoc 1 / Ames).